Reading from the N-terminus, the 364-residue chain is Fructose-1,6-bisphosphatase class 1 1 (364 aa).

Mg(2+) is bound by residues Glu-99, Asp-121, Leu-123, and Asp-124. Residues 124 to 127 (DGSS) and Asn-220 each bind substrate. Glu-292 is a Mg(2+) binding site.

This sequence belongs to the FBPase class 1 family. Homotetramer. Mg(2+) serves as cofactor.

The protein resides in the cytoplasm. It carries out the reaction beta-D-fructose 1,6-bisphosphate + H2O = beta-D-fructose 6-phosphate + phosphate. Its pathway is carbohydrate biosynthesis; gluconeogenesis. In Albidiferax ferrireducens (strain ATCC BAA-621 / DSM 15236 / T118) (Rhodoferax ferrireducens), this protein is Fructose-1,6-bisphosphatase class 1 1.